The primary structure comprises 103 residues: Co-chaperonin GroES (103 aa).

It belongs to the GroES chaperonin family. In terms of assembly, heptamer of 7 subunits arranged in a ring. Interacts with the chaperonin GroEL.

It localises to the cytoplasm. In terms of biological role, together with the chaperonin GroEL, plays an essential role in assisting protein folding. The GroEL-GroES system forms a nano-cage that allows encapsulation of the non-native substrate proteins and provides a physical environment optimized to promote and accelerate protein folding. GroES binds to the apical surface of the GroEL ring, thereby capping the opening of the GroEL channel. The chain is Co-chaperonin GroES from Crocosphaera subtropica (strain ATCC 51142 / BH68) (Cyanothece sp. (strain ATCC 51142)).